We begin with the raw amino-acid sequence, 455 residues long: Nucleoside-triphosphatase (455 aa).

The active-site Proton acceptor is the glutamate 168.

It belongs to the GDA1/CD39 NTPase family.

It is found in the nucleus. The enzyme catalyses a ribonucleoside 5'-triphosphate + H2O = a ribonucleoside 5'-diphosphate + phosphate + H(+). Might be involved in RNA transport out of nuclei. This chain is Nucleoside-triphosphatase, found in Pisum sativum (Garden pea).